Here is a 70-residue protein sequence, read N- to C-terminus: MGIGVWELLLLFLIVLVVFGTKRLRNIGGDLGGAIKSFRQAMSENEDKPSEGGARTLEGEVVDKKEKDKV.

The helical transmembrane segment at 1-21 threads the bilayer; it reads MGIGVWELLLLFLIVLVVFGT. Positions 42-70 are disordered; that stretch reads MSENEDKPSEGGARTLEGEVVDKKEKDKV. The segment covering 57 to 70 has biased composition (basic and acidic residues); it reads LEGEVVDKKEKDKV.

The protein belongs to the TatA/E family. The Tat system comprises two distinct complexes: a TatABC complex, containing multiple copies of TatA, TatB and TatC subunits, and a separate TatA complex, containing only TatA subunits. Substrates initially bind to the TatABC complex, which probably triggers association of the separate TatA complex to form the active translocon.

The protein localises to the cell inner membrane. In terms of biological role, part of the twin-arginine translocation (Tat) system that transports large folded proteins containing a characteristic twin-arginine motif in their signal peptide across membranes. TatA could form the protein-conducting channel of the Tat system. The polypeptide is Sec-independent protein translocase protein TatA (Methylococcus capsulatus (strain ATCC 33009 / NCIMB 11132 / Bath)).